The primary structure comprises 440 residues: Thymidine phosphorylase (440 aa).

It belongs to the thymidine/pyrimidine-nucleoside phosphorylase family. In terms of assembly, homodimer.

It catalyses the reaction thymidine + phosphate = 2-deoxy-alpha-D-ribose 1-phosphate + thymine. Its pathway is pyrimidine metabolism; dTMP biosynthesis via salvage pathway; dTMP from thymine: step 1/2. The enzymes which catalyze the reversible phosphorolysis of pyrimidine nucleosides are involved in the degradation of these compounds and in their utilization as carbon and energy sources, or in the rescue of pyrimidine bases for nucleotide synthesis. This chain is Thymidine phosphorylase, found in Salmonella arizonae (strain ATCC BAA-731 / CDC346-86 / RSK2980).